Here is a 616-residue protein sequence, read N- to C-terminus: Electron transfer flavoprotein-ubiquinone oxidoreductase, mitochondrial (616 aa).

A mitochondrion-targeting transit peptide spans 1–32 (MLVRLTKLSCPAYHWFHALKIKKCLPLCAPRC). Residue 70-84 (VVIVGAGPAGLSAAI) participates in FAD binding. Lys95 carries the N6-acetyllysine modification. Residues 108-129 (IGAHTLSGACLDPAAFKELFPD) lie within the membrane without spanning it. N6-acetyllysine is present on residues Lys131 and Lys222. A ubiquinone-binding residues include Gly304 and Gly305. N6-acetyllysine occurs at positions 356 and 415. Residues 427-446 (TGLHVTEYEDNLKQSWVWKE) lie within the membrane without spanning it. Ser550 is subject to Phosphoserine. [4Fe-4S] cluster-binding residues include Cys560, Cys585, Cys588, and Cys591. Residues 576-605 (FRLQINAQNCVHCKTCDIKDPSQNINWVVP) enclose the 4Fe-4S ferredoxin-type domain.

It belongs to the ETF-QO/FixC family. As to quaternary structure, monomer. [4Fe-4S] cluster is required as a cofactor. It depends on FAD as a cofactor. In terms of processing, acetylation of Lys-95 and Lys-222 is observed in liver mitochondria from fasted mice but not from fed mice.

It is found in the mitochondrion inner membrane. The enzyme catalyses a ubiquinone + reduced [electron-transfer flavoprotein] = a ubiquinol + oxidized [electron-transfer flavoprotein] + H(+). Accepts electrons from ETF and reduces ubiquinone. The sequence is that of Electron transfer flavoprotein-ubiquinone oxidoreductase, mitochondrial (Etfdh) from Mus musculus (Mouse).